The following is a 43-amino-acid chain: Protein PsbN (43 aa).

The chain crosses the membrane as a helical span at residues 5-25 (TVLSIFISSLLLGITIYSIYI).

The protein belongs to the PsbN family.

The protein localises to the plastid. It localises to the chloroplast thylakoid membrane. May play a role in photosystem I and II biogenesis. This Gracilaria tenuistipitata var. liui (Red alga) protein is Protein PsbN.